Reading from the N-terminus, the 947-residue chain is MIGALARRLFGSPNDRRIKGYQPRVAAINALEPEVAALSDEALRARTVDFRAQIAAGATLDDILVPAFATVREAAKRTLGQRHFDVQLIGGMVLHEGDIAEMKTGEGKTLVATLAVYLNALAGKGVHVVTVNDYLAKRDSAWMGEIYTFLGMTTGVIVHGLSDAERKAAYGCDITYGTNNEYGFDYLRDNMKYTLEEMVQRGHAYAIVDEVDSILIDEARTPLIISGPLDDRSEFYNTIDTFLPKLDKATDFEVDEKQRTVTLTEVGMETIEVLLRDAGQLKGESLYDIENVSVVHHINQALRAHSLFQRDKDYIVRNDEVIIIDEFTGRMMPGRRYSEGLHQALEAKEHVTVQPENQTLASITFQNYFRMYDKLAGMTGTALTEADELFDIYKLEVVEIPTNVPIARLDEDDEVYRTQNEKYAAILAEVERANSRLQPVLVGTASIEKSEVLADYLKNNGYKQIDFADPKGMEKLYAAARAGKPAKLFAVLNARFHEQEAYIVAEAGVPGAITIATNMAGRGTDIKLGGSLEMRIEHETVDITDEAEKAAKIELIKADVERFRELVLRAEETIEIEPAKGAKPAKTLTRPGGLYIIGSERHESRRIDNQLRGRSGRQGDPGRSKFFLSLEDDLMRIFGSDRLDTMLTKLGLKEGEAIIHPWINKALEKAQQKVEARNFDIRKNLLKFDNVSNDQRKVIFDQRIDLMQDESVAETVSDMRHIFVEDLVAKHVPEHAYAEQWDVAGLKEELNRVLGLDLPVEEWAKEEGIAEEELLSRIENRADEHMAAKVAQWGPEMMRYAEKSILLQTLDHLWREHLVMLDHLRNVIGLRGYGQRDPLQEYKSEAFNLFEALIAHLREAVTAQLMRVEIVTQEPQPELPPMAAHKFDPQTGEDELAFASVALAPADDADKAARDPNRPETWGKVGRNEDCPCNSGKKYKHCHGRYA.

ATP contacts are provided by residues Gln-87, 105–109 (GEGKT), and Asp-525. The interval 907 to 937 (DDADKAARDPNRPETWGKVGRNEDCPCNSGK) is disordered. The span at 908–918 (DADKAARDPNR) shows a compositional bias: basic and acidic residues. Positions 931, 933, 942, and 943 each coordinate Zn(2+).

It belongs to the SecA family. As to quaternary structure, monomer and homodimer. Part of the essential Sec protein translocation apparatus which comprises SecA, SecYEG and auxiliary proteins SecDF-YajC and YidC. Zn(2+) is required as a cofactor.

The protein resides in the cell inner membrane. Its subcellular location is the cytoplasm. It carries out the reaction ATP + H2O + cellular proteinSide 1 = ADP + phosphate + cellular proteinSide 2.. Its function is as follows. Part of the Sec protein translocase complex. Interacts with the SecYEG preprotein conducting channel. Has a central role in coupling the hydrolysis of ATP to the transfer of proteins into and across the cell membrane, serving both as a receptor for the preprotein-SecB complex and as an ATP-driven molecular motor driving the stepwise translocation of polypeptide chains across the membrane. The polypeptide is Protein translocase subunit SecA 1 (Rhodopseudomonas palustris (strain BisA53)).